Consider the following 859-residue polypeptide: MKEFPKNYNFTENEKKWQQIWQEKQIYAYDPNISKDEIYVVDTPPPTVSGQLHIGHVYSYTQTDFIVRFQRMMGKNIFYPMGFDDNGLPTERLVEKQKQIKAYNMSRSEFIKICEEVVASEEEKFRSLFNQIALSVDWSLEYQTISPLSRKISQMSFLDLVKKGEVYRNDQPILWDPVDGTALAQADIDDKEKTSFMNYITFEIEEDDRPFSKFAYREEFVGNTEHSTAAYIKVREDASTGLTHKLPLEVEFGKRSITIATTRPELLPACVAVFYHPDDKRYKHLAGKSAITPLFNGKVPLLADPLVQQDKGTGLVMCCTFGDQTDITWWKTHNLPLKTIVTKKGTIDFPHDIAIDGLKIKEARTKIIDILKEQNLLTKQEEITHTVKCAERSGAPLEILTVPQWFVKTISHKEALLKRASELNWHPKNMKIRLESWINSISWDWCISRQRYFGVPFPVWYSKRVGEEGKILYADISQLPVDPLKDLPIGYSKEEVEPDLDVMDTWATSSVSPQLSTHGISDDFTVNKERHDKLFPMELRPQAHEIIRTWAFYTILKAHLHQNTLPWKNIMVSGWCLAEDRSKMSKSKGNVLVPEKLLEQYGSDVIRYWSANSKLGADTAYSEDVMKNGKRLVNKLWNAAKFVSIHFEKLKDKDKQAKLLDVKEKITNEFDQWMINKLVELVKLATNELQNYEYANAMHLTEKFFWAIFCDNYLEISKNRAYDEENKNPSGQYSSILTLYHTMQILLKLFAPFMPHITEELYQILYSDKSVHEKGNWVNYGDLNYKIDAKGAEGLLEILDIVRKFKAEKNLSIKAPIKLLEVSGIELSAELTEDLKNVTSAEEIQFEDQGDKIKVNVIL.

The short motif at 46–56 (PTVSGQLHIGH) is the 'HIGH' region element. The short motif at 583–587 (KMSKS) is the 'KMSKS' region element. K586 contributes to the ATP binding site.

The protein belongs to the class-I aminoacyl-tRNA synthetase family. ValS type 2 subfamily. Monomer.

It is found in the cytoplasm. The catalysed reaction is tRNA(Val) + L-valine + ATP = L-valyl-tRNA(Val) + AMP + diphosphate. Its function is as follows. Catalyzes the attachment of valine to tRNA(Val). As ValRS can inadvertently accommodate and process structurally similar amino acids such as threonine, to avoid such errors, it has a 'posttransfer' editing activity that hydrolyzes mischarged Thr-tRNA(Val) in a tRNA-dependent manner. The protein is Valine--tRNA ligase of Rickettsia felis (strain ATCC VR-1525 / URRWXCal2) (Rickettsia azadi).